A 219-amino-acid polypeptide reads, in one-letter code: Transmembrane protein 179B (219 aa).

4 consecutive transmembrane segments (helical) span residues 9–29, 65–85, 96–116, and 167–187; these read VELA…AAMT, FVAG…LFWI, GAIG…LVLV, and TSSW…VVQW. The segment at 198-219 is disordered; the sequence is ERGDPEWSSETDALVGSRLSHS. Phosphoserine is present on residues S206 and S214.

It belongs to the TMEM179 family.

The protein resides in the membrane. This chain is Transmembrane protein 179B (TMEM179B), found in Homo sapiens (Human).